Here is a 135-residue protein sequence, read N- to C-terminus: Auxin-responsive protein SAUR66 (135 aa).

Belongs to the ARG7 family.

Its subcellular location is the cell membrane. In terms of biological role, may promote auxin-stimulated organ elongation, such as hypocotyls, stamen filaments and petals. This chain is Auxin-responsive protein SAUR66, found in Arabidopsis thaliana (Mouse-ear cress).